Here is a 55-residue protein sequence, read N- to C-terminus: Large ribosomal subunit protein bL33 (55 aa).

The protein belongs to the bacterial ribosomal protein bL33 family.

In Buchnera aphidicola subsp. Acyrthosiphon pisum (strain APS) (Acyrthosiphon pisum symbiotic bacterium), this protein is Large ribosomal subunit protein bL33 (rpmG).